The primary structure comprises 998 residues: Sensor histidine kinase AruS (998 aa).

Disordered regions lie at residues 27–82, 154–198, and 224–245; these read ERRP…HARA, RQAG…LPAG, and RQHP…RQPR. Positions 40-49 are enriched in low complexity; it reads GEAAVRRAGL. Over residues 161–183 the composition is skewed to basic residues; that stretch reads HRLHRPRTTHRHAVRRAPGRRRE. 2 helical membrane-spanning segments follow: residues 264-284 and 395-415; these read VLLF…FFEY and ASLL…SWLF. One can recognise an HAMP domain in the interval 417 to 473; it reads SLVTRHLWRMSEFAGHIAEGDLQQPLRLDKVDRERDEIDAVAAALEDMRQALRTDRR. The Histidine kinase domain maps to 513–734; it reads TMSHEIRTPL…TFWFEIELAL (222 aa). His-516 is subject to Phosphohistidine; by autocatalysis. The 119-residue stretch at 751–869 folds into the Response regulatory domain; sequence EVLLVEDVAL…ELRRALGEVG (119 aa). Asp-800 carries the post-translational modification 4-aspartylphosphate. The 94-residue stretch at 894 to 987 folds into the HPt domain; that stretch reads GRHKLAGLLG…RDGAEALRRA (94 aa). His-933 carries the phosphohistidine modification.

Autophosphorylated. Activation may require a sequential transfer of a phosphate group from a His in the primary transmitter domain, to an Asp in the receiver domain and to a His in the secondary transmitter domain.

It is found in the cell membrane. It carries out the reaction ATP + protein L-histidine = ADP + protein N-phospho-L-histidine.. Its pathway is amino-acid degradation; L-arginine degradation [regulation]. Its function is as follows. Member of the two-component regulatory system AruS/AruR, which is involved in the regulation of the arginine transaminase (ATA) pathway in response to exogeneous L-arginine. Probably functions as a sensor kinase that phosphorylates AruR. This is Sensor histidine kinase AruS (aruS) from Pseudomonas aeruginosa (strain ATCC 15692 / DSM 22644 / CIP 104116 / JCM 14847 / LMG 12228 / 1C / PRS 101 / PAO1).